The following is a 519-amino-acid chain: MTSPSTSDKDRVVIFDTTLRDGEQCPGATMTHEEKLEVAEMLDTMGVDIIEAGFPIASVGDFEAVAEIAKRANNAVIAGLARAIPADIVRAGEAVRHAKRGRIHTFVSTSPIHLAHQMRKSEEDVLGIITATVAQARNLVDDVEWSAMDSTRTPIDYLCRCVETAIAAGATTINLPDTVGYAVPEEYRRMFKVIRERVPNADKAVFSVHCHDDLGLAVANSLAGVEGGARQIECTINGIGERAGNAALEEVVMAIKTRGDVMPYWCNVESTTLTRASKVVSAATSFPVQYNKAIVGRNAFAHESGIHQDGVLKNAQTYEIMTPESVGVKQTSLVMGKHSGRHAFQHKLRELGYELADNQLQDAFVRFKALADRKKDIYDEDIEALVDQELAQTHDRLRLVSLTVIAGTHGPQRATMKVEVDGKVRIDEAEGNGPVDAVFNAVKTLVPHEAKLELYQVHAVTAGTDAQAEVSVRLSQDGRSVTARSSDPDTLVASAKAYLSALNKIISRQQREAPVAAAS.

In terms of domain architecture, Pyruvate carboxyltransferase spans 12 to 274 (VVIFDTTLRD…WCNVESTTLT (263 aa)). Mn(2+)-binding residues include aspartate 21, histidine 209, histidine 211, and asparagine 245. The segment at 398–519 (RLVSLTVIAG…QREAPVAAAS (122 aa)) is regulatory domain.

This sequence belongs to the alpha-IPM synthase/homocitrate synthase family. LeuA type 1 subfamily. In terms of assembly, homodimer. Mn(2+) is required as a cofactor.

It is found in the cytoplasm. The enzyme catalyses 3-methyl-2-oxobutanoate + acetyl-CoA + H2O = (2S)-2-isopropylmalate + CoA + H(+). It participates in amino-acid biosynthesis; L-leucine biosynthesis; L-leucine from 3-methyl-2-oxobutanoate: step 1/4. Catalyzes the condensation of the acetyl group of acetyl-CoA with 3-methyl-2-oxobutanoate (2-ketoisovalerate) to form 3-carboxy-3-hydroxy-4-methylpentanoate (2-isopropylmalate). This chain is 2-isopropylmalate synthase, found in Afipia carboxidovorans (strain ATCC 49405 / DSM 1227 / KCTC 32145 / OM5) (Oligotropha carboxidovorans).